Consider the following 307-residue polypeptide: Phosphoribosylaminoimidazole-succinocarboxamide synthase (307 aa).

It belongs to the SAICAR synthetase family.

The catalysed reaction is 5-amino-1-(5-phospho-D-ribosyl)imidazole-4-carboxylate + L-aspartate + ATP = (2S)-2-[5-amino-1-(5-phospho-beta-D-ribosyl)imidazole-4-carboxamido]succinate + ADP + phosphate + 2 H(+). The protein operates within purine metabolism; IMP biosynthesis via de novo pathway; 5-amino-1-(5-phospho-D-ribosyl)imidazole-4-carboxamide from 5-amino-1-(5-phospho-D-ribosyl)imidazole-4-carboxylate: step 1/2. The chain is Phosphoribosylaminoimidazole-succinocarboxamide synthase from Thermobifida fusca (strain YX).